Consider the following 358-residue polypeptide: Zinc transporter ZIP1 (358 aa).

Topologically, residues 1 to 7 (MDLLFAK) are extracellular. The helical transmembrane segment at 8-28 (IICIGIFLVVTTFGCFIPHLM) threads the bilayer. Residues 29-53 (GLYKEKENEEKNKRVKNILSNLNCF) lie on the Cytoplasmic side of the membrane. The helical transmembrane segment at 54-74 (GSGFIFSIIMFHLLPETIHII) threads the bilayer. Over 75–91 (SDHGNIRIFNTSDSQMK) the chain is Extracellular. Residues 92–112 (ILYIFFFVFIGFCMQLGLEYV) form a helical membrane-spanning segment. At 113–186 (LPVDTNICCV…GKFLEILTLQ (74 aa)) the chain is on the cytoplasmic side. The chain crosses the membrane as a helical span at residues 187 to 207 (SFFLTISLAIHSCIEGMIIGT). Topologically, residues 208–213 (STDVNY) are extracellular. The chain crosses the membrane as a helical span at residues 214–234 (VFISSFCILLHKWIAGVTVSL). The Cytoplasmic segment spans residues 235–246 (SLNSNNMNKTLK). A helical transmembrane segment spans residues 247 to 267 (AILLLTFVFASPLGIVLGHMA). At 268-273 (KSAGQK) the chain is on the extracellular side. Residues 274-294 (VTCLINAVSIGTLLFIGCEIL) traverse the membrane as a helical segment. The Cytoplasmic segment spans residues 295 to 310 (LNEIKQNISRKVRLCK). A helical transmembrane segment spans residues 311-331 (WLSFCFSCLIAFALISFTTSM). Over 332–358 (APHTHGDIDTHVHVHHHDHDHDHGHNH) the chain is Extracellular.

Belongs to the ZIP transporter (TC 2.A.5) family. In terms of assembly, homodimer.

It is found in the plastid. The protein localises to the apicoplast. The protein resides in the cell membrane. The catalysed reaction is Zn(2+)(in) = Zn(2+)(out). The enzyme catalyses Fe(2+)(in) = Fe(2+)(out). Its function is as follows. Transporter for the divalent zinc cation. Mediates the influx of zinc into cells from extracellular space. Can transport divalent iron ions. Does not transport manganese and cadmium cations. The protein is Zinc transporter ZIP1 of Plasmodium falciparum (isolate 3D7).